The chain runs to 152 residues: Protein-export protein SecB (152 aa).

It belongs to the SecB family. Homotetramer, a dimer of dimers. One homotetramer interacts with 1 SecA dimer.

The protein resides in the cytoplasm. Functionally, one of the proteins required for the normal export of preproteins out of the cell cytoplasm. It is a molecular chaperone that binds to a subset of precursor proteins, maintaining them in a translocation-competent state. It also specifically binds to its receptor SecA. In Rickettsia peacockii (strain Rustic), this protein is Protein-export protein SecB.